A 276-amino-acid polypeptide reads, in one-letter code: MKISKTKTPKLVLIAGPCVIESLDNLRGIAIKLQPLANNERLDFYFKASFDKANRTSLESYRGPGLEKGLEMLQAIKDEFGYKILTDVHESYQVSIAVKVADILQIPAFLCRQTDLIVEVSQTNAIINIKKGQFMSPKDMQYSVLKALKTRDKNIQNPTYENALANGVWLCERGSSFGYGNLVVDMRSLKIMREFAPVIFDATHSVQMPGGANGKSSGESSFAPILARAAAAVGVDGLFAETHIDPKNALSDGANMLKPNELESLVTDMLKIQNLF.

This sequence belongs to the KdsA family.

The protein resides in the cytoplasm. The catalysed reaction is D-arabinose 5-phosphate + phosphoenolpyruvate + H2O = 3-deoxy-alpha-D-manno-2-octulosonate-8-phosphate + phosphate. It functions in the pathway carbohydrate biosynthesis; 3-deoxy-D-manno-octulosonate biosynthesis; 3-deoxy-D-manno-octulosonate from D-ribulose 5-phosphate: step 2/3. Its pathway is bacterial outer membrane biogenesis; lipopolysaccharide biosynthesis. In Helicobacter acinonychis (strain Sheeba), this protein is 2-dehydro-3-deoxyphosphooctonate aldolase.